Reading from the N-terminus, the 324-residue chain is Probable RuBisCO transcriptional regulator (324 aa).

An HTH lysR-type domain is found at 8 to 65 (FSLEQLRILKAIATEGSFKKAAESLYMTQPAISLQIQTLEKKLNIALFDRSGRRALMT). Positions 25–44 (FKKAAESLYMTQPAISLQIQ) form a DNA-binding region, H-T-H motif.

This sequence belongs to the LysR transcriptional regulatory family.

The protein resides in the plastid. It is found in the cyanelle. Its function is as follows. Trans-acting transcriptional regulator of RuBisCO genes (rbcL and rbcS) expression. The sequence is that of Probable RuBisCO transcriptional regulator (rbcR) from Cyanophora paradoxa.